A 92-amino-acid chain; its full sequence is UPF0223 protein SGO_1052 (92 aa).

It belongs to the UPF0223 family.

The protein is UPF0223 protein SGO_1052 of Streptococcus gordonii (strain Challis / ATCC 35105 / BCRC 15272 / CH1 / DL1 / V288).